Consider the following 261-residue polypeptide: DNA repair protein RecO (261 aa).

The protein belongs to the RecO family.

Its function is as follows. Involved in DNA repair and RecF pathway recombination. In Chlorobium phaeobacteroides (strain BS1), this protein is DNA repair protein RecO.